A 208-amino-acid polypeptide reads, in one-letter code: Ras-related protein M-Ras (208 aa).

GTP-binding residues include aspartate 21, glycine 22, glycine 23, valine 24, glycine 25, lysine 26, serine 27, alanine 28, phenylalanine 38, valine 39, proline 40, tyrosine 42, proline 44, and threonine 45. Serine 27 serves as a coordination point for Mg(2+). The Effector region signature appears at 42-50 (YDPTIEDSY). Residues threonine 45 and aspartate 67 each contribute to the Mg(2+) site. GTP contacts are provided by glycine 70, asparagine 126, lysine 127, aspartate 129, serine 156, alanine 157, and lysine 158. A Cysteine methyl ester modification is found at cysteine 205. A lipid anchor (S-geranylgeranyl cysteine) is attached at cysteine 205. Positions 206–208 (VIL) are cleaved as a propeptide — removed in mature form.

It belongs to the small GTPase superfamily. Ras family. Component of the SHOC2-MRAS-PP1c (SMP) holophosphatase complex consisting of SHOC2, GTP-bound M-Ras/MRAS and the catalytic subunit of protein phosphatase 1 (either PPP1CA, PPP1CB or PPP1CC). Interacts (active GTP-bound form) with both SHOC2 and PP1c (all isoforms) to form a tertiary complex; SHOC2 and PP1c preferably bind M-Ras/MRAS, but they also bind K-Ras/KRAS, N-Ras/NRAS and H-Ras/HRAS. Interacts with RGL3. Interacts (active GTP-bound form preferentially) with RGS14. Requires Mg(2+) as cofactor. Expressed in skeletal muscle cells.

The protein localises to the cell membrane. The enzyme catalyses GTP + H2O = GDP + phosphate + H(+). Functionally, signal transducer in the Ras-MAPK signaling pathway that regulates cell proliferation and survival. Core component of the SHOC2-MRAS-PP1c (SMP) holophosphatase complex that regulates the MAPK pathway activation. The formation of the SMP complex only occurs when MRAS is GTP-bound. MRAS has low intrinsic GTPase activity and may require additional factors for activation. The SMP complex specifically dephosphorylates the inhibitory phosphorylation at 'Ser-259' of RAF1 kinase, 'Ser-365' of BRAF kinase and 'Ser-214' of ARAF kinase, stimulating their kinase activities. In Rattus norvegicus (Rat), this protein is Ras-related protein M-Ras (Mras).